Reading from the N-terminus, the 327-residue chain is GTPase Obg (327 aa).

The Obg domain occupies 1–159; it reads MQFIDQANII…WEVQLELKLL (159 aa). Positions 160–327 constitute an OBG-type G domain; it reads AEVGIIGLPN…SLLFEVWKRI (168 aa). Residues 166–173, 191–195, 213–216, 280–283, and 309–311 contribute to the ATP site; these read GLPNAGKS, FTTLI, DIPG, NKME, and SSS. Residues Ser-173 and Thr-193 each contribute to the Mg(2+) site.

The protein belongs to the TRAFAC class OBG-HflX-like GTPase superfamily. OBG GTPase family. Monomer. Mg(2+) serves as cofactor.

The protein resides in the cytoplasm. Functionally, an essential GTPase which binds GTP, GDP and possibly (p)ppGpp with moderate affinity, with high nucleotide exchange rates and a fairly low GTP hydrolysis rate. Plays a role in control of the cell cycle, stress response, ribosome biogenesis and in those bacteria that undergo differentiation, in morphogenesis control. The polypeptide is GTPase Obg (Prochlorococcus marinus (strain MIT 9312)).